The sequence spans 111 residues: Putative FAD-linked sulfhydryl oxidase 347L (111 aa).

The ERV/ALR sulfhydryl oxidase domain maps to 2–109 (TDIDPHIWGP…LPESVARKKW (108 aa)). Cys49 and Cys52 are oxidised to a cystine.

This sequence belongs to the IIV-6 347L family. Requires FAD as cofactor.

The enzyme catalyses 2 R'C(R)SH + O2 = R'C(R)S-S(R)CR' + H2O2. Its function is as follows. FAD-dependent sulfhydryl oxidase that catalyzes disulfide bond formation. The sequence is that of Putative FAD-linked sulfhydryl oxidase 347L from Invertebrate iridescent virus 6 (IIV-6).